The sequence spans 438 residues: Actin-like protein ARP6 (438 aa).

A disordered region spans residues 158-181; sequence DIVRGNSDSTNSTSSESKNAQDSG. Low complexity predominate over residues 163–174; the sequence is NSDSTNSTSSES.

It belongs to the actin family. ARP6 subfamily. In terms of assembly, component of the SWR1 chromatin remodeling complex composed of at least ACT1, ARP4, RVB1, RVB2, ARP6, YAF9, VPS71, VPS72, SWC3, SWC4, SWC5, SWC7 and SWR1, and perhaps BDF1.

Its subcellular location is the cytoplasm. The protein resides in the nucleus. Functionally, component of the SWR1 complex which mediates the ATP-dependent exchange of histone H2A for the H2A variant HZT1 leading to transcriptional regulation of selected genes by chromatin remodeling. Involved in chromosome stability. This chain is Actin-like protein ARP6 (ARP6), found in Saccharomyces cerevisiae (strain ATCC 204508 / S288c) (Baker's yeast).